A 372-amino-acid polypeptide reads, in one-letter code: Chorismate synthase (372 aa).

Arg48 is a binding site for NADP(+). FMN-binding positions include 125–127 (RSS), Gly285, 300–304 (KPTPS), and Arg327.

Belongs to the chorismate synthase family. The cofactor is FMNH2.

It catalyses the reaction 5-O-(1-carboxyvinyl)-3-phosphoshikimate = chorismate + phosphate. It functions in the pathway metabolic intermediate biosynthesis; chorismate biosynthesis; chorismate from D-erythrose 4-phosphate and phosphoenolpyruvate: step 7/7. Its function is as follows. Catalyzes the anti-1,4-elimination of the C-3 phosphate and the C-6 proR hydrogen from 5-enolpyruvylshikimate-3-phosphate (EPSP) to yield chorismate, which is the branch point compound that serves as the starting substrate for the three terminal pathways of aromatic amino acid biosynthesis. This reaction introduces a second double bond into the aromatic ring system. The protein is Chorismate synthase of Methanocella arvoryzae (strain DSM 22066 / NBRC 105507 / MRE50).